A 141-amino-acid polypeptide reads, in one-letter code: uncharacterized protein (141 aa).

Residues 13-35 (PVIGVILMVAITVILAAVIASFV) traverse the membrane as a helical segment.

The protein localises to the membrane. This is an uncharacterized protein from Archaeoglobus fulgidus (strain ATCC 49558 / DSM 4304 / JCM 9628 / NBRC 100126 / VC-16).